We begin with the raw amino-acid sequence, 239 residues long: Ribonuclease PH (239 aa).

Phosphate-binding positions include Arg-87 and 125–127 (GTR).

Belongs to the RNase PH family. In terms of assembly, homohexameric ring arranged as a trimer of dimers.

The catalysed reaction is tRNA(n+1) + phosphate = tRNA(n) + a ribonucleoside 5'-diphosphate. Phosphorolytic 3'-5' exoribonuclease that plays an important role in tRNA 3'-end maturation. Removes nucleotide residues following the 3'-CCA terminus of tRNAs; can also add nucleotides to the ends of RNA molecules by using nucleoside diphosphates as substrates, but this may not be physiologically important. Probably plays a role in initiation of 16S rRNA degradation (leading to ribosome degradation) during starvation. The chain is Ribonuclease PH from Pseudomonas aeruginosa (strain LESB58).